We begin with the raw amino-acid sequence, 442 residues long: Dihydrolipoyllysine-residue acetyltransferase component of pyruvate dehydrogenase complex (442 aa).

Residues 2–77 enclose the Lipoyl-binding domain; the sequence is AFEFKLPDIG…TVGQTIITFD (76 aa). Lys-43 carries the N6-lipoyllysine modification. Over residues 84–97 the composition is skewed to basic and acidic residues; that stretch reads LQFKGSDESDDAKT. The tract at residues 84-136 is disordered; the sequence is LQFKGSDESDDAKTEAQVQSTAEAGQDVAKEEQAQEPAKATGAGQQDQAEVDP. One can recognise a Peripheral subunit-binding (PSBD) domain in the interval 141-178; it reads IAMPSVRKYAREKGVDIRKVTGSGNNGRVVKEDIDSFV. Residues 182–208 show a composition bias toward low complexity; the sequence is AQEAAPQETAAPQETAAKPAAAPAPEG. The tract at residues 182-215 is disordered; sequence AQEAAPQETAAPQETAAKPAAAPAPEGEFPETRE. His-413 is a catalytic residue.

It belongs to the 2-oxoacid dehydrogenase family. As to quaternary structure, forms a 24-polypeptide structural core with octahedral symmetry. (R)-lipoate serves as cofactor.

The enzyme catalyses N(6)-[(R)-dihydrolipoyl]-L-lysyl-[protein] + acetyl-CoA = N(6)-[(R)-S(8)-acetyldihydrolipoyl]-L-lysyl-[protein] + CoA. Its function is as follows. The pyruvate dehydrogenase complex catalyzes the overall conversion of pyruvate to acetyl-CoA and CO(2). It contains multiple copies of three enzymatic components: pyruvate dehydrogenase (E1), dihydrolipoamide acetyltransferase (E2) and lipoamide dehydrogenase (E3). In terms of biological role, the B.subtilis PDH complex also possesses branched-chain 2-oxoacid dehydrogenase (BCDH) activity. The sequence is that of Dihydrolipoyllysine-residue acetyltransferase component of pyruvate dehydrogenase complex (pdhC) from Bacillus subtilis (strain 168).